Here is a 215-residue protein sequence, read N- to C-terminus: Heart- and neural crest derivatives-expressed protein 1 (215 aa).

Disordered stretches follow at residues 53 to 109 and 169 to 202; these read APDF…RTES and VDGG…KGRT. Residues 65–75 show a composition bias toward low complexity; that stretch reads AAAAAATYGPD. Over residues 92–104 the composition is skewed to basic residues; sequence LGRRKGSGPKKER. Positions 94-146 constitute a bHLH domain; it reads RRKGSGPKKERRRTESINSAFAELRECIPNVPADTKLSKIKTLRLATSYIAYL. A Phosphothreonine; by PLK4 modification is found at T107. Position 109 is a phosphoserine; by PLK4 (S109).

In terms of assembly, efficient DNA binding requires dimerization with another bHLH protein. Forms homodimers and heterodimers with TCF3 gene products E12 and E47, HAND2 and HEY1, HEY2 and HEYL (hairy-related transcription factors). Interacts with MDFIC. Interacts with SOX15; the interaction enhances HAND1-induced differentiation of trophoblast giant cells. In terms of processing, phosphorylation by PLK4 disrupts the interaction with MDFIC and leads to translocation into the nucleoplasm, allowing dimerization and transcription factor activity.

It is found in the nucleus. The protein localises to the nucleoplasm. The protein resides in the nucleolus. Transcription factor that plays an essential role in both trophoblast giant cell differentiation and in cardiac morphogenesis. Binds the DNA sequence 5'-NRTCTG-3' (non-canonical E-box). Acts as a transcriptional repressor of SOX15. In the adult, could be required for ongoing expression of cardiac-specific genes. The polypeptide is Heart- and neural crest derivatives-expressed protein 1 (HAND1) (Oryctolagus cuniculus (Rabbit)).